The chain runs to 459 residues: Vanillin aminotransferase (459 aa).

Residues Gly-115–Ser-116 and Asp-255 each bind pyridoxal 5'-phosphate. Lys-284 carries the post-translational modification N6-(pyridoxal phosphate)lysine. Residue Phe-320–Thr-321 coordinates pyridoxal 5'-phosphate. Positions Leu-430–Gln-457 form a coiled coil.

This sequence belongs to the class-III pyridoxal-phosphate-dependent aminotransferase family. In terms of tissue distribution, confined to the placenta of green fruits at high levels. Barely detectable in the pericarp and seeds as well as in the placenta of mature fruits.

The enzyme catalyses vanillin + L-alanine = vanillylamine + pyruvate. It participates in aromatic compound metabolism; phenylpropanoid biosynthesis. Functionally, involved in the biosynthesis of capsaicinoids natural products, pungent alkaloids synthesized from phenylpropanoid intermediates in the placental tissue of chili pepper fruit acting as repellant on herbivorous mammals and conferring spiciness to hot peppers. Can transfer an amine from vanillylamine to pyruvate forming vanillin and L-alanine. The polypeptide is Vanillin aminotransferase (Capsicum annuum (Capsicum pepper)).